Consider the following 206-residue polypeptide: LexA repressor (206 aa).

A DNA-binding region (H-T-H motif) is located at residues 28–48 (VREIGEAVGLASSSTVHGHLA). Residues S128 and K166 each act as for autocatalytic cleavage activity in the active site.

This sequence belongs to the peptidase S24 family. As to quaternary structure, homodimer.

The catalysed reaction is Hydrolysis of Ala-|-Gly bond in repressor LexA.. Functionally, represses a number of genes involved in the response to DNA damage (SOS response), including recA and lexA. In the presence of single-stranded DNA, RecA interacts with LexA causing an autocatalytic cleavage which disrupts the DNA-binding part of LexA, leading to derepression of the SOS regulon and eventually DNA repair. This chain is LexA repressor, found in Bacillus velezensis (strain DSM 23117 / BGSC 10A6 / LMG 26770 / FZB42) (Bacillus amyloliquefaciens subsp. plantarum).